The primary structure comprises 403 residues: Phosphoglycerate kinase (403 aa).

Substrate contacts are provided by residues 22-24 (DLN), Arg37, 60-63 (HLGR), Arg119, and Arg156. Residues Lys206, Gly302, Glu333, and 359–362 (GGDS) contribute to the ATP site.

This sequence belongs to the phosphoglycerate kinase family. Monomer.

It localises to the cytoplasm. It carries out the reaction (2R)-3-phosphoglycerate + ATP = (2R)-3-phospho-glyceroyl phosphate + ADP. The protein operates within carbohydrate degradation; glycolysis; pyruvate from D-glyceraldehyde 3-phosphate: step 2/5. In Leifsonia xyli subsp. xyli (strain CTCB07), this protein is Phosphoglycerate kinase.